Consider the following 864-residue polypeptide: Carbohydrate-responsive element-binding protein (864 aa).

Disordered regions lie at residues 15-41 (PRVV…AGGL) and 53-77 (MVSS…LADF). Residues serine 20, serine 23, and serine 25 each carry the phosphoserine modification. Position 27 is a phosphothreonine (threonine 27). Residue serine 196 is modified to Phosphoserine. Disordered regions lie at residues 332–397 (SSGI…APGP), 449–468 (PGVS…QPGP), 489–533 (PHFT…TARD), 547–570 (PEQA…PQDT), and 583–602 (PIPA…LAPP). Residues 351 to 368 (GMTPHSGNTRLQARNSCS) are compositionally biased toward polar residues. A compositionally biased stretch (low complexity) spans 513 to 531 (ASPPTLASATASPTATATA). The residue at position 566 (serine 566) is a Phosphoserine; by AMPK. Over residues 583–596 (PIPAPTPPRPPPGP) the composition is skewed to pro residues. Phosphoserine is present on residues serine 614, serine 626, and serine 643. Positions 661-715 (NRRITHISAEQKRRFNIKLGFDTLHGLVSTLSAQPSLKVSKATTLQKTAEYILML) constitute a bHLH domain. The tract at residues 715–736 (LQQERAAMQEEAQQLRDEIEEL) is leucine-zipper.

As to quaternary structure, binds DNA as a heterodimer with TCFL4/MLX. Post-translationally, phosphorylation at Ser-566 by AMPK inactivates the DNA-binding activity. Expressed in the ventricular and intermediate zones of the developing spinal cord of 12.5 dpc embryos. In later embryos expressed in a variety of tissues.

It localises to the nucleus. Transcriptional repressor. Binds to the canonical and non-canonical E box sequences 5'-CACGTG-3'. This chain is Carbohydrate-responsive element-binding protein (Mlxipl), found in Mus musculus (Mouse).